The following is a 336-amino-acid chain: Prenytransferase ascA (336 aa).

Positions 1–26 are disordered; that stretch reads MAAKSRSPKRGTSEKTPLVEKEAPYQ. Residues 11-23 show a composition bias toward basic and acidic residues; sequence GTSEKTPLVEKEA. The next 8 membrane-spanning stretches (helical) occupy residues 52–72, 74–94, 131–151, 179–199, 206–226, 251–271, 272–292, and 314–334; these read PHGN…ASAI, PTEL…TFLM, GHVF…SLPI, VILG…VGLP, FVPT…YDVV, LEGL…TLGY, LVGM…FGLV, and FAIL…DYVV.

It belongs to the UbiA prenyltransferase family. Mg(2+) serves as cofactor.

Its subcellular location is the membrane. It catalyses the reaction orsellinate + (2E,6E)-farnesyl diphosphate = ilicicolinate B + diphosphate. It participates in secondary metabolite biosynthesis; terpenoid biosynthesis. In terms of biological role, prenytransferase; part of the asc-1 gene cluster that mediates the biosynthesis of both ascochlorin and ascofuranone, a strong inhibitor of cyanide-insensitive alternative oxidases and a promising drug candidate against African trypanosomiasis. The first step in the pathway is performed by the non-reducing polyketide synthase ascC that produces orsellinic acid by condensing acetyl-CoA with 3 malonyl-CoA units. Orsellinic acid is then prenylated by the prenyltransferase ascA to yield ilicicolinic acid B. Ilicicolinic acid B is further reduced to ilicicolin B by the reductase ascB. The halogenase ascD then chlorinates ilicicolin B to produce ilicicolin A which is converted to ilicicolin A epoxide by the cytochrome P450 monooxygenase ascE that catalyzes stereoselective epoxidation of the terminal double bond of the prenyl group. Ilicicolin A epoxide is the last common precursor for the biosynthesis of ascofuranone and ascochlorin. The terpene cyclase ascF produces a monocyclic terpene, and the cyclization reaction is proposed to be initiated by protonation of the terminal epoxide of ilicicolin A epoxide to generate a monocyclic tertiarycation, which is followed by a series of hydride and methyl shifts with abstraction of proton, leading to the formation of the (14S,15R,19R)-trimethylcyclohexanone ring structure of ilicicolin C, which is finally reduced to ascochlorin by the dehydrogenase ascG. On the other hand, ilicicolin A epoxide is hydroxylated by the cytochrome P450 monooxygenase ascH, and the resultant product is cyclized by the terpene cyclase ascI to ascofuranol via protonation-initiated epoxide ring opening, which facilitates the 6-endo-tet cyclization to form the tetrahy-drofuran ring. Finally, ascofuranol is oxidized into ascofuranone by ascJ. This chain is Prenytransferase ascA, found in Acremonium egyptiacum (Oospora egyptiaca).